We begin with the raw amino-acid sequence, 143 residues long: UPF0201 protein Pars_1985 (143 aa).

The protein belongs to the UPF0201 family.

The chain is UPF0201 protein Pars_1985 from Pyrobaculum arsenaticum (strain DSM 13514 / JCM 11321 / PZ6).